A 481-amino-acid chain; its full sequence is Argininosuccinate lyase (481 aa).

Belongs to the lyase 1 family. Argininosuccinate lyase subfamily.

Its subcellular location is the cytoplasm. The catalysed reaction is 2-(N(omega)-L-arginino)succinate = fumarate + L-arginine. The protein operates within amino-acid biosynthesis; L-arginine biosynthesis; L-arginine from L-ornithine and carbamoyl phosphate: step 3/3. The chain is Argininosuccinate lyase from Kineococcus radiotolerans (strain ATCC BAA-149 / DSM 14245 / SRS30216).